Reading from the N-terminus, the 605-residue chain is NADH-ubiquinone oxidoreductase chain 5 (605 aa).

The next 16 membrane-spanning stretches (helical) occupy residues 11-31 (ILIT…LPPI), 49-69 (LSLT…ISSL), 77-97 (LAMS…ALFI), 120-140 (MFLL…NFFP), 141-161 (MLVG…WWHG), 178-198 (LADI…SSLD), 202-222 (FFAT…MAAM), 244-264 (VSAL…LIGM), 273-295 (GFSE…KALL), 302-322 (IIAF…GLNH), 325-345 (LAFM…LCAG), 371-391 (ASCF…TGFF), 408-425 (LWAT…IYSL), 457-477 (LALA…PIYT), 488-508 (LAAL…ISLA), and 584-604 (IKTY…IMLF).

It belongs to the complex I subunit 5 family.

It is found in the mitochondrion inner membrane. It carries out the reaction a ubiquinone + NADH + 5 H(+)(in) = a ubiquinol + NAD(+) + 4 H(+)(out). In terms of biological role, core subunit of the mitochondrial membrane respiratory chain NADH dehydrogenase (Complex I) that is believed to belong to the minimal assembly required for catalysis. Complex I functions in the transfer of electrons from NADH to the respiratory chain. The immediate electron acceptor for the enzyme is believed to be ubiquinone. This Pelomedusa subrufa (African side-necked turtle) protein is NADH-ubiquinone oxidoreductase chain 5 (MT-ND5).